A 620-amino-acid chain; its full sequence is 1-deoxy-D-xylulose-5-phosphate synthase (620 aa).

Thiamine diphosphate is bound by residues H75 and 116 to 118; that span reads AHS. D147 is a binding site for Mg(2+). Residues 148-149, N177, Y284, and E366 contribute to the thiamine diphosphate site; that span reads GA. N177 serves as a coordination point for Mg(2+).

It belongs to the transketolase family. DXPS subfamily. In terms of assembly, homodimer. Requires Mg(2+) as cofactor. Thiamine diphosphate is required as a cofactor.

The enzyme catalyses D-glyceraldehyde 3-phosphate + pyruvate + H(+) = 1-deoxy-D-xylulose 5-phosphate + CO2. Its pathway is metabolic intermediate biosynthesis; 1-deoxy-D-xylulose 5-phosphate biosynthesis; 1-deoxy-D-xylulose 5-phosphate from D-glyceraldehyde 3-phosphate and pyruvate: step 1/1. In terms of biological role, catalyzes the acyloin condensation reaction between C atoms 2 and 3 of pyruvate and glyceraldehyde 3-phosphate to yield 1-deoxy-D-xylulose-5-phosphate (DXP). This is 1-deoxy-D-xylulose-5-phosphate synthase from Bordetella pertussis (strain Tohama I / ATCC BAA-589 / NCTC 13251).